The primary structure comprises 87 residues: uncharacterized protein (87 aa).

A helical transmembrane segment spans residues 42 to 62 (LADALYSAGSAAFTIAASLVA).

This sequence belongs to the SPP1 holin family.

The protein localises to the membrane. This is an uncharacterized protein from Bacillus licheniformis.